A 358-amino-acid chain; its full sequence is MAATLGSGERWTEAYIDAVRRNKYPEDTPPESHDPCGCCNCVKAQKEKKSENEWTQTRQGEGSSMYSEEQLLGVQRIKKCRNYYEILGVSRDASDEELKKAYRKLALKFHPDKNCAPGATDAFKAIGNAFAVLSNPDKRLRYDEYGDEQVTFTAPRARPYNYYRDFEADITPEELSNVFFGGHFPTGNIHMFSNVTDDAHYYRRRHRHERTQTQKEEEEEKPQTTYSAFIQLLPVLVIVIISVITQLLATNPPYSLFYKSTLGYTISRETQNLQVPYFVDKNFDKAYRGASLHDLEKTIEKDYIDYIRTSCWKEKQQKSELTNLAGLYRDERLKQKAESLKLENCEKLSKLIGLRRGG.

Residues 82–146 form the J domain; it reads NYYEILGVSR…DKRLRYDEYG (65 aa). A helical transmembrane segment spans residues 228–248; that stretch reads AFIQLLPVLVIVIISVITQLL.

The protein localises to the endoplasmic reticulum membrane. This chain is DnaJ homolog subfamily C member 18 (DNAJC18), found in Macaca fascicularis (Crab-eating macaque).